The following is a 212-amino-acid chain: Orotate phosphoribosyltransferase (212 aa).

Residues R97, K101, H103, and 123-131 (EDLISTGGS) contribute to the 5-phospho-alpha-D-ribose 1-diphosphate site. S127 serves as a coordination point for orotate.

This sequence belongs to the purine/pyrimidine phosphoribosyltransferase family. PyrE subfamily. Homodimer. Requires Mg(2+) as cofactor.

The catalysed reaction is orotidine 5'-phosphate + diphosphate = orotate + 5-phospho-alpha-D-ribose 1-diphosphate. The protein operates within pyrimidine metabolism; UMP biosynthesis via de novo pathway; UMP from orotate: step 1/2. In terms of biological role, catalyzes the transfer of a ribosyl phosphate group from 5-phosphoribose 1-diphosphate to orotate, leading to the formation of orotidine monophosphate (OMP). The polypeptide is Orotate phosphoribosyltransferase (Bacteroides thetaiotaomicron (strain ATCC 29148 / DSM 2079 / JCM 5827 / CCUG 10774 / NCTC 10582 / VPI-5482 / E50)).